The sequence spans 329 residues: Ribosomal RNA small subunit methyltransferase H (329 aa).

S-adenosyl-L-methionine contacts are provided by residues 34 to 36, Asp-59, Phe-86, Asp-112, and Gln-119; that span reads GGH.

It belongs to the methyltransferase superfamily. RsmH family.

It localises to the cytoplasm. The enzyme catalyses cytidine(1402) in 16S rRNA + S-adenosyl-L-methionine = N(4)-methylcytidine(1402) in 16S rRNA + S-adenosyl-L-homocysteine + H(+). Specifically methylates the N4 position of cytidine in position 1402 (C1402) of 16S rRNA. In Chlorobium phaeobacteroides (strain DSM 266 / SMG 266 / 2430), this protein is Ribosomal RNA small subunit methyltransferase H.